The sequence spans 148 residues: Large ribosomal subunit protein uL15 (148 aa).

Basic residues predominate over residues 1-30 (MSTHKKKTRKLRGHVSHGHGRIGKHRKHPG). The disordered stretch occupies residues 1–37 (MSTHKKKTRKLRGHVSHGHGRIGKHRKHPGGRGNAGG).

Belongs to the universal ribosomal protein uL15 family.

This Tenebrio molitor (Yellow mealworm beetle) protein is Large ribosomal subunit protein uL15 (RpL27A).